Consider the following 511-residue polypeptide: uncharacterized protein (511 aa).

Transmembrane regions (helical) follow at residues tryptophan 7–leucine 27, valine 46–leucine 66, leucine 80–alanine 100, glycine 107–isoleucine 127, leucine 134–isoleucine 154, tryptophan 163–leucine 183, alanine 200–glutamine 220, serine 226–valine 246, valine 266–phenylalanine 286, leucine 301–leucine 321, glycine 329–isoleucine 349, methionine 357–leucine 377, threonine 394–phenylalanine 414, and leucine 437–alanine 457. Residues alanine 465 to leucine 486 are disordered.

It belongs to the major facilitator superfamily.

It localises to the cell membrane. This is an uncharacterized protein from Bacillus subtilis (strain 168).